Consider the following 285-residue polypeptide: Bifunctional protein FolD (285 aa).

NADP(+)-binding positions include 165–167 and S190; that span reads GAS.

It belongs to the tetrahydrofolate dehydrogenase/cyclohydrolase family. In terms of assembly, homodimer.

It carries out the reaction (6R)-5,10-methylene-5,6,7,8-tetrahydrofolate + NADP(+) = (6R)-5,10-methenyltetrahydrofolate + NADPH. The enzyme catalyses (6R)-5,10-methenyltetrahydrofolate + H2O = (6R)-10-formyltetrahydrofolate + H(+). The protein operates within one-carbon metabolism; tetrahydrofolate interconversion. Catalyzes the oxidation of 5,10-methylenetetrahydrofolate to 5,10-methenyltetrahydrofolate and then the hydrolysis of 5,10-methenyltetrahydrofolate to 10-formyltetrahydrofolate. The chain is Bifunctional protein FolD from Cupriavidus metallidurans (strain ATCC 43123 / DSM 2839 / NBRC 102507 / CH34) (Ralstonia metallidurans).